We begin with the raw amino-acid sequence, 738 residues long: Flowering time control protein FCA (738 aa).

The disordered stretch occupies residues 1–118 (MHRGGDRSTD…RGDHSDHDNR (118 aa)). Composition is skewed to gly residues over residues 52-70 (RGGG…GGGR) and 81-98 (SGGG…GEPG). Positions 109 to 118 (RGDHSDHDNR) are enriched in basic and acidic residues. RRM domains are found at residues 122-203 (VKLF…YADG) and 213-293 (HKLF…FADP). 2 disordered regions span residues 292 to 414 (DPKR…GHHL) and 566 to 594 (QQSN…AIIP). Residues 301–311 (SRGGPAFGGPG) show a composition bias toward gly residues. Positions 342–358 (HPSSPRSAPHQFNNFGS) are enriched in polar residues. Positions 368–377 (TVTSTTDTAT) are enriched in low complexity. Composition is skewed to polar residues over residues 383–401 (FSGN…SSHM) and 575–594 (PTQG…AIIP). In terms of domain architecture, WW spans 609–642 (VPLTCNWTEHTSPEGFKYYYNSITRESKWDKPEE). Positions 670–738 (MQQLQSPPQA…QSAQERAWKS (69 aa)) are disordered. Over residues 683–706 (PAMQPVQQIPQAQQGQQQMQMKQQ) the composition is skewed to low complexity. Residues 723-732 (RIQQGIQSAQ) are compositionally biased toward polar residues.

In terms of assembly, interacts with FY. Binds to SF1, FIK, RPRD1B, Os09g0509000/LOC_Os09g33480 and MADS8. Mostly expressed in young flowers (panicles) and stems, and also present in young seedlings leaves and roots.

It is found in the nucleus. In terms of biological role, plays a major role in the promotion of the transition of the vegetative meristem to reproductive development. Required for RNA-mediated chromatin silencing of a range of loci in the genome. Cotranscriptionally recognizes aberrant RNA and marks it for silencing. Controls alternative cleavage and polyadenylation on pre-mRNAs and antisense RNAs. Regulates flowering time, seed size and cell volume, probably via the modulation of cell size. This chain is Flowering time control protein FCA, found in Oryza sativa subsp. japonica (Rice).